The following is a 457-amino-acid chain: uncharacterized protein (457 aa).

The TRAM domain occupies Ala10 to Gln69. Residues Cys82, Cys88, Cys91, and Cys170 each coordinate [4Fe-4S] cluster. S-adenosyl-L-methionine is bound by residues Gln294, Tyr323, Glu344, and Asp387. Cys414 serves as the catalytic Nucleophile.

Belongs to the class I-like SAM-binding methyltransferase superfamily. RNA M5U methyltransferase family.

This is an uncharacterized protein from Gloeobacter violaceus (strain ATCC 29082 / PCC 7421).